Here is a 359-residue protein sequence, read N- to C-terminus: Histamine H2 receptor (359 aa).

At Met-1–Thr-22 the chain is on the extracellular side. The N-linked (GlcNAc...) asparagine glycan is linked to Asn-4. The chain crosses the membrane as a helical span at residues Val-23–Gly-44. The Cytoplasmic portion of the chain corresponds to Leu-45–Ile-57. Residues Val-58 to Ser-81 form a helical membrane-spanning segment. The Extracellular portion of the chain corresponds to Cys-82 to Asn-92. A disulfide bridge connects residues Cys-91 and Cys-174. A helical membrane pass occupies residues Ile-93–Leu-114. At Asp-115 to Arg-134 the chain is on the cytoplasmic side. Residues Val-135–Asn-159 form a helical membrane-spanning segment. Over Ser-160–Glu-180 the chain is Extracellular. Residues Val-181–Arg-204 traverse the membrane as a helical segment. Residues Ile-205 to Val-234 lie on the Cytoplasmic side of the membrane. The chain crosses the membrane as a helical span at residues Thr-235–Gly-258. The Extracellular portion of the chain corresponds to Leu-259 to Glu-267. The chain crosses the membrane as a helical span at residues Val-268–Ala-289. Residues Ala-290–Arg-359 are Cytoplasmic-facing. Residue Cys-305 is the site of S-palmitoyl cysteine attachment. The tract at residues Ser-316 to Leu-340 is disordered. The span at Leu-317–Thr-327 shows a compositional bias: polar residues. Residues Gln-328–Leu-340 are compositionally biased toward basic and acidic residues.

It belongs to the G-protein coupled receptor 1 family.

The protein localises to the cell membrane. Functionally, the H2 subclass of histamine receptors mediates gastric acid secretion. Also appears to regulate gastrointestinal motility and intestinal secretion. Possible role in regulating cell growth and differentiation. The activity of this receptor is mediated by G proteins which activate adenylyl cyclase and, through a separate G protein-dependent mechanism, the phosphoinositide/protein kinase (PKC) signaling pathway. The sequence is that of Histamine H2 receptor (HRH2) from Gorilla gorilla gorilla (Western lowland gorilla).